The primary structure comprises 232 residues: Ashwin (232 aa).

Composition is skewed to basic and acidic residues over residues 64–97 and 116–127; these read DLPK…DGLR and KKTENGDNDRLR. The disordered stretch occupies residues 64–232; the sequence is DLPKSRWGKM…KRKIQHVTWP (169 aa). Polar residues predominate over residues 130-140; sequence PQASATSNTFR. Ser-143 carries the post-translational modification Phosphoserine. Positions 144-156 are enriched in low complexity; that stretch reads DSSSSVSPLVLSS. Positions 163 to 179 are enriched in basic and acidic residues; that stretch reads KMEHGNNDNKQNHDLTH. 3 positions are modified to phosphoserine: Ser-182, Ser-189, and Ser-193. The residue at position 198 (Thr-198) is a Phosphothreonine.

Belongs to the ashwin family. Component of the tRNA-splicing ligase complex.

It localises to the nucleus. The sequence is that of Ashwin from Bos taurus (Bovine).